A 145-amino-acid chain; its full sequence is Large ribosomal subunit protein uL15 (145 aa).

The disordered stretch occupies residues 1–52 (MFNLLKPKGASKRRKIVGRGPGSGLGKTSGRGQKGQKARNTSPRLGFEGGQT). Gly residues predominate over residues 19 to 33 (RGPGSGLGKTSGRGQ).

The protein belongs to the universal ribosomal protein uL15 family. As to quaternary structure, part of the 50S ribosomal subunit.

Functionally, binds to the 23S rRNA. In Borreliella burgdorferi (strain ATCC 35210 / DSM 4680 / CIP 102532 / B31) (Borrelia burgdorferi), this protein is Large ribosomal subunit protein uL15.